Here is a 625-residue protein sequence, read N- to C-terminus: Interferon-induced GTP-binding protein Mx2 (625 aa).

In terms of domain architecture, Dynamin-type G spans 29 to 302; the sequence is DLALPAIAVI…LVFHIGRCLP (274 aa). The segment at 39-46 is G1 motif; sequence GDQSSGKS. 39–46 contacts GTP; sequence GDQSSGKS. Residues 64 to 66 form a G2 motif region; sequence VTR. The segment at 140–143 is G3 motif; that stretch reads DLPG. GTP contacts are provided by residues 140-144 and 209-212; these read DLPGI and TKPD. The G4 motif stretch occupies residues 209 to 212; it reads TKPD. The segment at 241–244 is G5 motif; it reads RCRG. In terms of domain architecture, GED spans 539–625; it reads REELTCHLKS…TEALKYLAKF (87 aa).

Belongs to the TRAFAC class dynamin-like GTPase superfamily. Dynamin/Fzo/YdjA family.

The protein localises to the cytoplasm. The sequence is that of Interferon-induced GTP-binding protein Mx2 (mx2) from Ictalurus punctatus (Channel catfish).